The chain runs to 241 residues: uncharacterized protein (241 aa).

This is an uncharacterized protein from Pasteurella multocida (strain Pm70).